The sequence spans 110 residues: Late cornified envelope protein 2C (110 aa).

A compositionally biased stretch (low complexity) spans 1 to 10 (MSCQQNQQQC). Residues 1–23 (MSCQQNQQQCQPPPKCPPKCTPK) form a disordered region. Pro residues predominate over residues 11–23 (QPPPKCPPKCTPK).

Belongs to the LCE family. Interacts with CYSRT1; the interaction is direct. In terms of tissue distribution, skin-specific. Expression was readily detected in adult trunk skin, adult arm skin, fetal skin, penal skin, vulva, esophagus and tongue. Not expressed in the cervix, rectum, lung, colon, or placenta.

Precursors of the cornified envelope of the stratum. The sequence is that of Late cornified envelope protein 2C (LCE2C) from Homo sapiens (Human).